The sequence spans 147 residues: Large ribosomal subunit protein uL15 (147 aa).

The disordered stretch occupies residues 1–55 (MKLDNLAPQPGAKKRKRRVGRGIAAGQGASCGFGMRGQKSRSGRPTRPGFEGGQM). Gly residues predominate over residues 23–35 (IAAGQGASCGFGM).

Belongs to the universal ribosomal protein uL15 family. In terms of assembly, part of the 50S ribosomal subunit.

Its function is as follows. Binds to the 23S rRNA. This chain is Large ribosomal subunit protein uL15, found in Synechococcus elongatus (strain ATCC 33912 / PCC 7942 / FACHB-805) (Anacystis nidulans R2).